Consider the following 589-residue polypeptide: Probable ATP-dependent RNA helicase DDX59 (589 aa).

Disordered stretches follow at residues 1–36 (MFVP…QLEG) and 48–98 (KEAV…SKTQ). Residues 12 to 27 (NSNDDLKSCEAKKSKP) are compositionally biased toward basic and acidic residues. Residue lysine 26 forms a Glycyl lysine isopeptide (Lys-Gly) (interchain with G-Cter in SUMO2) linkage. A Phosphoserine modification is found at serine 64. Residues 80–91 (GVKDSHPSEEPV) show a composition bias toward basic and acidic residues. The segment at 104-133 (GEPVCVVCGRYGEYICDKTDEDVCSLECKA) adopts an HIT-type zinc-finger fold. Residues serine 156 and serine 160 each carry the phosphoserine modification. The short motif at 203–231 (IDFEHCGFPETLNQNLKKSGYEVPTPIQM) is the Q motif element. The 142-residue stretch at 234–375 (IPVGLLGRDI…DQLLHNPVRI (142 aa)) folds into the Helicase ATP-binding domain. 247–254 (ADTGSGKT) serves as a coordination point for ATP. A DEAD box motif is present at residues 323 to 326 (VKAD). One can recognise a Helicase C-terminal domain in the interval 399–549 (KKKKLFEILN…ILPPQLLNSP (151 aa)).

Belongs to the DEAD box helicase family. DDX59 subfamily. In terms of assembly, interacts (via HIT-type zinc finger) with the RUVBL1/RUVBL2 complex in the presence of ADP.

It is found in the cytoplasm. Its subcellular location is the nucleus. The catalysed reaction is ATP + H2O = ADP + phosphate + H(+). The sequence is that of Probable ATP-dependent RNA helicase DDX59 (Ddx59) from Rattus norvegicus (Rat).